The following is a 661-amino-acid chain: MTELTPGIAAPLGAYYDGNGINFSLYSAHATGVELCLFDEQQREVRLPLATRSGDIWHGYLPGGKPGQRYGYRVHGPFDPAQGLRFNPNKLLLDPAARAVEGPVADDPYLHGGYDRPDRHDSAELMPKCVVIDEAYDWQDDCPPATPWGKTVIYEAHVRGLTLQHPEIPQVLRGSFAALGHPVMIAYFKRLGITALELLPVQQHSSEPRLQRLGLINYWGYNVLAPYAPDNRYSSLRTDMTPLREFRDAVKALHKAGIEVILDVVFNHSAELDTDGPTLSLRGIDNPGYYWLTPDGGYVNDTGCGNTLRLDQPQGVAWVMDCLRFWVGECHVDGFRFDLGSVLGRTPAFDRDAPLFQAMLADDLLSRCKLIAEPWDIGPGGYQVGEFPGRFAEWNDHYRDDMRRFWLQGDISLGQFAQRFAASSDLFNQRGRAPYASINMLTAHDGFTLQDLVSFSRKHNQLNGEGNRDGSDRNFSNNHGVEGPIADDAIVQRRRASRQALLATLLLSQGTPMLLAGDEHGHSQQGNNNAYCQDNAITWLDWATADDSLTAYTAALIHLRQQIPALQHDRWWQEGDGNVQWLNAQGQSLSAQQWEQGDLQLQICLSQRWLVVVNATQQAVEMTLPAGDWQLVAPFTQEDSRAVLPAWNQAAHSICVLVKKK.

Asp-338 acts as the Nucleophile in catalysis. Residue Glu-373 is the Proton donor of the active site. The disordered stretch occupies residues 460 to 481; sequence NQLNGEGNRDGSDRNFSNNHGV.

It belongs to the glycosyl hydrolase 13 family.

It carries out the reaction Hydrolysis of (1-&gt;6)-alpha-D-glucosidic linkages to branches with degrees of polymerization of three or four glucose residues in limit dextrin.. It functions in the pathway glycan degradation; glycogen degradation. In terms of biological role, removes maltotriose and maltotetraose chains that are attached by 1,6-alpha-linkage to the limit dextrin main chain, generating a debranched limit dextrin. The sequence is that of Glycogen debranching enzyme from Serratia proteamaculans (strain 568).